Here is a 76-residue protein sequence, read N- to C-terminus: NADH-ubiquinone oxidoreductase chain 4L (76 aa).

A run of 3 helical transmembrane segments spans residues 1–21 (MTPV…GLAF), 29–49 (ALLC…LWAL), and 56–76 (YSVA…AGLA).

This sequence belongs to the complex I subunit 4L family.

It localises to the mitochondrion membrane. It carries out the reaction a ubiquinone + NADH + 5 H(+)(in) = a ubiquinol + NAD(+) + 4 H(+)(out). Its function is as follows. Core subunit of the mitochondrial membrane respiratory chain NADH dehydrogenase (Complex I) which catalyzes electron transfer from NADH through the respiratory chain, using ubiquinone as an electron acceptor. Part of the enzyme membrane arm which is embedded in the lipid bilayer and involved in proton translocation. The protein is NADH-ubiquinone oxidoreductase chain 4L (MT-ND4L) of Oncorhynchus masou (Cherry salmon).